Reading from the N-terminus, the 288-residue chain is Small ribosomal subunit protein uS3 (288 aa).

A KH type-2 domain is found at 39-107 (VREYLKAKLK…PVAVNIEEVR (69 aa)). Positions 209–288 (GRNDLPAAET…AAAAADGKGE (80 aa)) are disordered. Basic and acidic residues predominate over residues 219–238 (PRPEEERRPRGPRRDGRPGD). A compositionally biased stretch (low complexity) spans 277 to 288 (APAAAAADGKGE).

Belongs to the universal ribosomal protein uS3 family. As to quaternary structure, part of the 30S ribosomal subunit. Forms a tight complex with proteins S10 and S14.

Functionally, binds the lower part of the 30S subunit head. Binds mRNA in the 70S ribosome, positioning it for translation. This Acidovorax sp. (strain JS42) protein is Small ribosomal subunit protein uS3.